We begin with the raw amino-acid sequence, 132 residues long: Small ribosomal subunit protein uS8 (132 aa).

The protein belongs to the universal ribosomal protein uS8 family. As to quaternary structure, part of the 30S ribosomal subunit. Contacts proteins S5 and S12.

Its function is as follows. One of the primary rRNA binding proteins, it binds directly to 16S rRNA central domain where it helps coordinate assembly of the platform of the 30S subunit. The sequence is that of Small ribosomal subunit protein uS8 from Shouchella clausii (strain KSM-K16) (Alkalihalobacillus clausii).